Consider the following 410-residue polypeptide: SPbeta prophage-derived uncharacterized protein YonV (410 aa).

The chain is SPbeta prophage-derived uncharacterized protein YonV (yonV) from Bacillus subtilis (strain 168).